The primary structure comprises 449 residues: Tubulin alpha-1B chain (449 aa).

A GTP-binding site is contributed by Gln11. At Lys40 the chain carries N6-acetyllysine. The GTP site is built by Glu71, Ser140, Gly144, Thr145, Thr179, Asn206, and Asn228. Residue Glu71 coordinates Mg(2+). Glu254 is a catalytic residue.

This sequence belongs to the tubulin family. In terms of assembly, dimer of alpha and beta chains. A typical microtubule is a hollow water-filled tube with an outer diameter of 25 nm and an inner diameter of 15 nM. Alpha-beta heterodimers associate head-to-tail to form protofilaments running lengthwise along the microtubule wall with the beta-tubulin subunit facing the microtubule plus end conferring a structural polarity. Microtubules usually have 13 protofilaments but different protofilament numbers can be found in some organisms and specialized cells. Mg(2+) serves as cofactor. Post-translationally, acetylation of alpha chains at Lys-40 stabilizes microtubules and affects affinity and processivity of microtubule motors. This modification has a role in multiple cellular functions, ranging from cell motility, cell cycle progression or cell differentiation to intracellular trafficking and signaling.

The protein resides in the cytoplasm. It is found in the cytoskeleton. Its subcellular location is the spindle. The protein localises to the nucleus. The enzyme catalyses GTP + H2O = GDP + phosphate + H(+). Functionally, tubulin is the major constituent of microtubules, a cylinder consisting of laterally associated linear protofilaments composed of alpha- and beta-tubulin heterodimers. Microtubules grow by the addition of GTP-tubulin dimers to the microtubule end, where a stabilizing cap forms. Below the cap, tubulin dimers are in GDP-bound state, owing to GTPase activity of alpha-tubulin. This is Tubulin alpha-1B chain (ALTBN) from Physarum polycephalum (Slime mold).